The primary structure comprises 77 residues: Acyl carrier protein (77 aa).

Residues M1–E76 enclose the Carrier domain. S36 is modified (O-(pantetheine 4'-phosphoryl)serine).

It belongs to the acyl carrier protein (ACP) family. 4'-phosphopantetheine is transferred from CoA to a specific serine of apo-ACP by AcpS. This modification is essential for activity because fatty acids are bound in thioester linkage to the sulfhydryl of the prosthetic group.

It is found in the cytoplasm. It participates in lipid metabolism; fatty acid biosynthesis. Carrier of the growing fatty acid chain in fatty acid biosynthesis. The chain is Acyl carrier protein from Staphylococcus saprophyticus subsp. saprophyticus (strain ATCC 15305 / DSM 20229 / NCIMB 8711 / NCTC 7292 / S-41).